The chain runs to 356 residues: Phosphoribosylformylglycinamidine cyclo-ligase (356 aa).

The protein belongs to the AIR synthase family.

It is found in the cytoplasm. It carries out the reaction 2-formamido-N(1)-(5-O-phospho-beta-D-ribosyl)acetamidine + ATP = 5-amino-1-(5-phospho-beta-D-ribosyl)imidazole + ADP + phosphate + H(+). Its pathway is purine metabolism; IMP biosynthesis via de novo pathway; 5-amino-1-(5-phospho-D-ribosyl)imidazole from N(2)-formyl-N(1)-(5-phospho-D-ribosyl)glycinamide: step 2/2. This Rhizobium meliloti (strain 1021) (Ensifer meliloti) protein is Phosphoribosylformylglycinamidine cyclo-ligase.